Reading from the N-terminus, the 228-residue chain is Phosphoglycolate phosphatase (228 aa).

Asp-12 (nucleophile) is an active-site residue. Residues Asp-12, Asp-14, and Asp-177 each coordinate Mg(2+).

Belongs to the HAD-like hydrolase superfamily. CbbY/CbbZ/Gph/YieH family. Mg(2+) serves as cofactor.

The enzyme catalyses 2-phosphoglycolate + H2O = glycolate + phosphate. It functions in the pathway organic acid metabolism; glycolate biosynthesis; glycolate from 2-phosphoglycolate: step 1/1. Functionally, specifically catalyzes the dephosphorylation of 2-phosphoglycolate. Is involved in the dissimilation of the intracellular 2-phosphoglycolate formed during the DNA repair of 3'-phosphoglycolate ends, a major class of DNA lesions induced by oxidative stress. The protein is Phosphoglycolate phosphatase of Vibrio vulnificus (strain CMCP6).